We begin with the raw amino-acid sequence, 127 residues long: Glycine cleavage system H protein (127 aa).

One can recognise a Lipoyl-binding domain in the interval 24-105 (TALAGITDFA…YGEGWLVKIK (82 aa)). Lys65 bears the N6-lipoyllysine mark.

Belongs to the GcvH family. As to quaternary structure, the glycine cleavage system is composed of four proteins: P, T, L and H. The cofactor is (R)-lipoate.

In terms of biological role, the glycine cleavage system catalyzes the degradation of glycine. The H protein shuttles the methylamine group of glycine from the P protein to the T protein. The protein is Glycine cleavage system H protein of Chlorobium phaeobacteroides (strain DSM 266 / SMG 266 / 2430).